Reading from the N-terminus, the 206-residue chain is Holliday junction branch migration complex subunit RuvA (206 aa).

Positions 1 to 64 (MIGKLKGTLD…EDMLRLYGFQ (64 aa)) are domain I. The tract at residues 65 to 144 (SALEREWFRL…AYAGAASGTI (80 aa)) is domain II. The tract at residues 145 to 154 (GLKQELGEGV) is flexible linker. The tract at residues 154–206 (VAPAPITDAVSALVNLGYSRDTAANAVAAALKTAGEDADASKLIRFGLKELAR) is domain III.

The protein belongs to the RuvA family. As to quaternary structure, homotetramer. Forms an RuvA(8)-RuvB(12)-Holliday junction (HJ) complex. HJ DNA is sandwiched between 2 RuvA tetramers; dsDNA enters through RuvA and exits via RuvB. An RuvB hexamer assembles on each DNA strand where it exits the tetramer. Each RuvB hexamer is contacted by two RuvA subunits (via domain III) on 2 adjacent RuvB subunits; this complex drives branch migration. In the full resolvosome a probable DNA-RuvA(4)-RuvB(12)-RuvC(2) complex forms which resolves the HJ.

The protein localises to the cytoplasm. Its function is as follows. The RuvA-RuvB-RuvC complex processes Holliday junction (HJ) DNA during genetic recombination and DNA repair, while the RuvA-RuvB complex plays an important role in the rescue of blocked DNA replication forks via replication fork reversal (RFR). RuvA specifically binds to HJ cruciform DNA, conferring on it an open structure. The RuvB hexamer acts as an ATP-dependent pump, pulling dsDNA into and through the RuvAB complex. HJ branch migration allows RuvC to scan DNA until it finds its consensus sequence, where it cleaves and resolves the cruciform DNA. This Mesorhizobium japonicum (strain LMG 29417 / CECT 9101 / MAFF 303099) (Mesorhizobium loti (strain MAFF 303099)) protein is Holliday junction branch migration complex subunit RuvA.